The following is a 120-amino-acid chain: Large ribosomal subunit protein eL8 (120 aa).

It belongs to the eukaryotic ribosomal protein eL8 family. Part of the 50S ribosomal subunit. Probably part of the RNase P complex.

The protein resides in the cytoplasm. Its function is as follows. Multifunctional RNA-binding protein that recognizes the K-turn motif in ribosomal RNA, the RNA component of RNase P, box H/ACA, box C/D and box C'/D' sRNAs. The polypeptide is Large ribosomal subunit protein eL8 (Haloquadratum walsbyi (strain DSM 16790 / HBSQ001)).